The chain runs to 657 residues: SAGA complex subunit SGF73 (657 aa).

4 residues coordinate Zn(2+): Cys-78, Cys-81, His-93, and Cys-98. 4 disordered regions span residues 98–225, 287–353, 469–532, and 572–636; these read CAGA…TEKH, EKRA…VNLT, QQQQ…SQDT, and ESNQ…NVSG. The span at 107 to 118 shows a compositional bias: basic and acidic residues; the sequence is TDPRDESTRETI. Acidic residues predominate over residues 131 to 163; that stretch reads DDDNSNDNNNDDDDDDDNDDNEDDDDADDDDDN. 2 stretches are compositionally biased toward polar residues: residues 174–193 and 200–210; these read SSFNPLKRSTSMESANTPNM and TGTPQTFSSSI. The 67-residue stretch at 220-286 folds into the SCA7 domain; that stretch reads NPTEKHLIDF…EHQTKIGAAA (67 aa). Over residues 306–321 the composition is skewed to basic residues; it reads QKKHTQQQKQGQRSKQ. Composition is skewed to low complexity over residues 325–336 and 469–493; these read NGGKSAKNGGKS and QQQQQQQQHHSPQAQAQASTQQPTQ. Residues 504–516 are compositionally biased toward polar residues; the sequence is ATNSSFNANVSSK. Residues 517-526 show a composition bias toward low complexity; it reads QIQQQQQQQQ. Positions 572–583 are enriched in polar residues; sequence ESNQDSHLSGTH. Positions 584–594 are enriched in low complexity; that stretch reads NNNSSKNGNNN. Residues 600-636 are compositionally biased toward polar residues; that stretch reads ASISSPNTSVNSIQSPPSVNSVNGSGQGVSTGINVSG.

The protein belongs to the ataxin-7 family. As to quaternary structure, component of the 1.8 MDa SAGA (Spt-Ada-Gcn5 acetyltransferase) complex, which is composed of 19 subunits TRA1, SPT7, TAF5, NGG1/ADA3, SGF73, SPT20/ADA5, SPT8, TAF12, TAF6, HFI1/ADA1, UBP8, GCN5, ADA2, SPT3, SGF29, TAF10, TAF9, SGF11 and SUS1. The SAGA complex is composed of 4 modules, namely the HAT (histone acetyltransferase) module (GCN5, ADA2, NGG1/ADA3 and SGF29), the DUB (deubiquitinating) module (UBP8, SGF11, SGF73 and SUS1), the core or TAF (TBP-associated factor) module (TAF5, TAF6, TAF9, TAF10 and TAF12), and the Tra1 or SPT (Suppressor of Ty) module (TRA1, HFI1/ADA1, SPT3, SPT7, SPT8 and SPT20/ADA5). The Tra1/SPT module binds activators, the core module recruits TBP (TATA-binding protein), the HAT module contains the histone H3 acetyltransferase GCN5, and the DUB module comprises the histone H2B deubiquitinase UBP8. Also identified in an altered form of SAGA, named SALSA (SAGA altered, Spt8 absent) or SLIK (SAGA-like) complex, which contains a C-terminal truncated form of SPT7 and is missing SPT8. However, it has been shown that the SAGA and SAGA-like SALSA/SLIK transcriptional coactivators are structurally and biochemically equivalent.

It localises to the nucleus. The protein resides in the cytoplasm. In terms of biological role, component of the transcription coactivator SAGA complex. SAGA acts as a general cofactor required for essentially all RNA polymerase II transcription. At the promoters, SAGA is required for transcription pre-initiation complex (PIC) recruitment. It influences RNA polymerase II transcriptional activity through different activities such as TBP interaction (via core/TAF module) and promoter selectivity, interaction with transcription activators (via Tra1/SPT module), and chromatin modification through histone acetylation (via HAT module) and deubiquitination (via DUB module). SAGA preferentially acetylates histones H3 (to form H3K9ac, H3K14ac, H3K18ac and H3K23ac) and H2B and deubiquitinates histone H2B. SAGA interacts with DNA via upstream activating sequences (UASs). Also identified in a modified version of SAGA named SALSA or SLIK. The cleavage of SPT7 and the absence of the SPT8 subunit in SLIK neither drive any major conformational differences in its structure compared with SAGA, nor significantly affect HAT, DUB, or DNA-binding activities. SGF73 tethers the DUB module to the rest of the SAGA complex through its central domain and activates the ubiquitin hydrolase UBP8 by maintaining its catalytic domain in an active conformation. SGF73 mediates recruitment of the TREX-2 mRNA export factors SAC3 and THP1 to SAGA, which is crucial to target TREX-2 to the nuclear pore complex (NPC) necessary for export of mRNA. Upon environmental stress, involved in the bypass of the canonical mRNA export process for the immediate export of stress-related transcripts to maintain proteostasis. The sequence is that of SAGA complex subunit SGF73 (SGF73) from Saccharomyces cerevisiae (strain ATCC 204508 / S288c) (Baker's yeast).